Consider the following 758-residue polypeptide: CRISPR system single-strand-specific deoxyribonuclease Cas10/Csm1 (subtype III-A) (758 aa).

The segment at 1–82 (MKKEKIDLFY…TYIADNIASG (82 aa)) is HD domain. The GGDEF domain occupies 509-647 (KRLAVVRLDV…EKDSISLFSS (139 aa)).

This sequence belongs to the CRISPR-associated Cas10/Csm1 family. As to quaternary structure, part of the Csm effector complex that includes at least Cas10(1), Csm2(3), Csm3(5), Csm4(1), Csm5(1) and mature crRNA. The Csm complex is elongated and slightly twisted with a maximal length of 215 Angstroms and a diameter of 75-80 Angstroms. It has been modeled to have a central protein filamant of Csm3 subunits along which the dsRNA helix of paired crRNA and target RNA binds. The filament is capped at one end by Cas10 and Csm4 and at the other end by Csm5; ssDNA is thought to bind to the N-terminal HD domain of Cas10. Csm with a precursor crRNA does not include Csm5, while Cas6, the enzyme probably involved in pre-crRNA processing, is found associated with a subset of the Csm complex. Requires a divalent metal cation as cofactor.

The catalysed reaction is 6 ATP = cyclic hexaadenylate + 6 diphosphate. With respect to regulation, ssDNase activity is activated by target RNA binding to the Csm-crRNA complex and is inhibited by EDTA. CRISPR (clustered regularly interspaced short palindromic repeat) is an adaptive immune system that provides protection against mobile genetic elements (viruses, transposable elements and conjugative plasmids). CRISPR clusters contain spacers, sequences complementary to antecedent mobile elements, and target invading nucleic acids. CRISPR clusters are transcribed and processed into CRISPR RNA (crRNA). The type III-A Csm effector complex binds crRNA and acts as a crRNA-guided RNase, DNase and cyclic oligoadenylate synthase; binding of target RNA cognate to the crRNA is required for all activities. In a heterologous host this Csm effector complex restricts ssRNA phage MS2, suggesting it may target RNA viruses in vivo. Functionally, csm functions as a non-specific ssDNase. Base-pairing between crRNA and target RNA to form a ternary Csm complex activates a ssDNase activity; target RNA cleavage suppresses the ssDNase, a temporal control that prevents uncontrolled DNA degradation. Viral RNA transcripts probably tether the Csm complex to the viral genome, recruiting Cas10 ssDNA activity which is able to degrade DNA in the transcription bubble, spatially controlling the DNase activity. Its function is as follows. This subunit has a weak ssDNase activity that is dramatically activated by the ternary Csm effector complex (the crRNA, Cas proteins and a cognate target ssRNA). Target RNA and ssDNA are cleaved simultaneously, although RNase activity (of Csm3) is much faster. RNA cleavage by Csm3 is not required for ssDNase activity as Csm complex with inactive Csm3 still has ssDNase activity; however as the cleaved target RNA products dissociate away ssDNase activity decreases. Self-recognition, with subsequent repression of the ssDNase activity, occurs when the 5' handle of the crRNA bases pairs with the 3' flanking sequence of the target RNA (which would occur if the CRISPR locus were transcribed as an anti-pre-crRNA). This protein has low activity on dsDNA which is not stimulated by the Csm complex. In terms of biological role, this subunit is a single-strand-specific deoxyribonuclease (ssDNase) which digests both linear and circular ssDNA; it has both exo- and endonuclease activity. When associated with the ternary Csm effector complex (the crRNA, Cas proteins and a cognate target ssRNA) synthesizes cyclic oligoadenylates (cOA) from ATP, producing cyclic triadenylate (cA3) up to cyclic hexaadenylate (cA6), which is the active cOA. The enzyme is also able to cyclize pppA3 up to pppA6. cOAs are second messengers that induce an antiviral state important for defense against invading nucleic acids. Synthesis of cOA can occur with AMP plus ATP, 2'dATP or 3'dATP (but no other nucleotides), and requires a free 3'-OH ribose moiety. In Streptococcus thermophilus, this protein is CRISPR system single-strand-specific deoxyribonuclease Cas10/Csm1 (subtype III-A).